We begin with the raw amino-acid sequence, 341 residues long: 4-hydroxy-2-oxovalerate aldolase (341 aa).

A Pyruvate carboxyltransferase domain is found at 5-257; that stretch reads ITLHDMTLRD…ETGVDVFRIA (253 aa). 13–14 provides a ligand contact to substrate; that stretch reads RD. Residue Asp14 coordinates Mn(2+). The active-site Proton acceptor is His17. Substrate is bound by residues Ser167 and His196. 2 residues coordinate Mn(2+): His196 and His198. Tyr287 contacts substrate.

Belongs to the 4-hydroxy-2-oxovalerate aldolase family.

It carries out the reaction (S)-4-hydroxy-2-oxopentanoate = acetaldehyde + pyruvate. In Cupriavidus taiwanensis (strain DSM 17343 / BCRC 17206 / CCUG 44338 / CIP 107171 / LMG 19424 / R1) (Ralstonia taiwanensis (strain LMG 19424)), this protein is 4-hydroxy-2-oxovalerate aldolase (mhpE).